We begin with the raw amino-acid sequence, 605 residues long: MNSVPNDLQTWKRFVKDGVLDEARLRKRIAESWHRCKKAEVNPYLEKGPKVLQQTELDQQSKKHSFFLTTAKPYLEKLLPAIKEMEMMALLIDSDGVVLALDGHPRALYEAKRINFVEGACWTETAVGTNAIGTALHISEPVAIQGSEHYSIASHLWNCSAAPIHHEDGSLAGVIDISCPAAGAHPHMLGIATAIAYAAERELAAKSREKELELISRFGERAASSVPMVLCNTKQHIISASMPIRTSMPDWQGRHLYELKERGYSIENAVTIGDGGTCFYLSEQKKKKAFRFNGVIGQSGRSQAMLMHLERAAATDASVCLSGETGTGKEVAARALHENSERRHGPFVAVNCGAIPSDLIESELFGYAEGAFTGAKRNGYKGAFQKANQGTLFLDEIGEISHSMQVALLRVLQERKITPIGGTKEIPVDIRVIAATHCDLRELAENGKIREDLFYRLHVYPIELPPLRDRTEDIPDLFEYYKQKNHWPGDLPSDFCNVLKQWKWPGNIRELFNVFERLSIRFPDGRLRDESLPALLEAAGLPASSAEKKPAAAGVLTFREQIQKDMMIKALESAKGNVSQAAKISGIPRSTFYKRLKKFNLSAES.

The Sigma-54 factor interaction domain occupies 295–520 (VIGQSGRSQA…LFNVFERLSI (226 aa)). Residues 323-330 (GETGTGKE) and 387-396 (ANQGTLFLDE) contribute to the ATP site. The segment at residues 578 to 597 (VSQAAKISGIPRSTFYKRLK) is a DNA-binding region (H-T-H motif).

Its function is as follows. Acts as a transcriptional activator of the acoABCL operon encoding the acetoin dehydrogenase complex. The chain is Acetoin dehydrogenase operon transcriptional activator AcoR (acoR) from Bacillus subtilis (strain 168).